Consider the following 149-residue polypeptide: UPF0756 membrane protein Nther_1957 (149 aa).

Transmembrane regions (helical) follow at residues 5 to 25 (IVVL…LVAT), 52 to 72 (LGIL…DIMP), 85 to 105 (LIAV…VELL), and 111 to 131 (VMVG…GVPA).

It belongs to the UPF0756 family.

The protein resides in the cell membrane. The chain is UPF0756 membrane protein Nther_1957 from Natranaerobius thermophilus (strain ATCC BAA-1301 / DSM 18059 / JW/NM-WN-LF).